Consider the following 520-residue polypeptide: Glutamate--cysteine ligase (520 aa).

It belongs to the glutamate--cysteine ligase type 1 family. Type 1 subfamily.

The enzyme catalyses L-cysteine + L-glutamate + ATP = gamma-L-glutamyl-L-cysteine + ADP + phosphate + H(+). The protein operates within sulfur metabolism; glutathione biosynthesis; glutathione from L-cysteine and L-glutamate: step 1/2. This is Glutamate--cysteine ligase from Leptospira interrogans serogroup Icterohaemorrhagiae serovar copenhageni (strain Fiocruz L1-130).